Here is a 315-residue protein sequence, read N- to C-terminus: Methionine import ATP-binding protein MetN (315 aa).

One can recognise an ABC transporter domain in the interval 2–219 (IEIEKVCVDF…PQHAFTQQLV (218 aa)). 16 to 23 (GTSGAGKS) serves as a coordination point for ATP.

This sequence belongs to the ABC transporter superfamily. Methionine importer (TC 3.A.1.24) family. In terms of assembly, the complex is composed of two ATP-binding proteins (MetN), two transmembrane proteins (MetI) and a solute-binding protein (MetQ).

It is found in the cell inner membrane. The catalysed reaction is L-methionine(out) + ATP + H2O = L-methionine(in) + ADP + phosphate + H(+). It carries out the reaction D-methionine(out) + ATP + H2O = D-methionine(in) + ADP + phosphate + H(+). Functionally, part of the ABC transporter complex MetNIQ involved in methionine import. Responsible for energy coupling to the transport system. This Salmonella enteritidis protein is Methionine import ATP-binding protein MetN.